The chain runs to 205 residues: High frequency lysogenization protein HflD homolog (205 aa).

The protein belongs to the HflD family.

The protein resides in the cytoplasm. It is found in the cell inner membrane. The chain is High frequency lysogenization protein HflD homolog from Vibrio campbellii (strain ATCC BAA-1116).